The sequence spans 272 residues: Pantothenate synthetase (272 aa).

Position 27–34 (27–34 (MGALHNGH)) interacts with ATP. His34 serves as the catalytic Proton donor. Gln58 lines the (R)-pantoate pocket. A beta-alanine-binding site is contributed by Gln58. 143–146 (GKKD) contacts ATP. Gln149 is a binding site for (R)-pantoate. ATP is bound by residues Val172 and 180–183 (LSSR).

This sequence belongs to the pantothenate synthetase family. In terms of assembly, homodimer.

The protein localises to the cytoplasm. The enzyme catalyses (R)-pantoate + beta-alanine + ATP = (R)-pantothenate + AMP + diphosphate + H(+). The protein operates within cofactor biosynthesis; (R)-pantothenate biosynthesis; (R)-pantothenate from (R)-pantoate and beta-alanine: step 1/1. Functionally, catalyzes the condensation of pantoate with beta-alanine in an ATP-dependent reaction via a pantoyl-adenylate intermediate. The chain is Pantothenate synthetase from Aliarcobacter butzleri (strain RM4018) (Arcobacter butzleri).